The chain runs to 247 residues: Uridylate kinase (247 aa).

Residue 11–14 participates in ATP binding; it reads KASG. Residues 19–24 are involved in allosteric activation by GTP; that stretch reads GKQGFG. G53 contributes to the UMP binding site. G54 and R58 together coordinate ATP. Residues D73 and 134–141 each bind UMP; that span reads TGNPFFTT. Residues T161, Q162, Y167, and D170 each coordinate ATP.

The protein belongs to the UMP kinase family. As to quaternary structure, homohexamer.

The protein resides in the cytoplasm. It carries out the reaction UMP + ATP = UDP + ADP. It participates in pyrimidine metabolism; CTP biosynthesis via de novo pathway; UDP from UMP (UMPK route): step 1/1. With respect to regulation, allosterically activated by GTP. Inhibited by UTP. Its function is as follows. Catalyzes the reversible phosphorylation of UMP to UDP. The polypeptide is Uridylate kinase (Chelativorans sp. (strain BNC1)).